Reading from the N-terminus, the 79-residue chain is MPRRVLQGQVISAKSDKTIIVSVERRFKHPVYHKTVKIAKKYAVHDPDNLYNQGDKVKIIESRPISKTKCWHVIEDKGQ.

It belongs to the universal ribosomal protein uS17 family. As to quaternary structure, part of the 30S ribosomal subunit.

One of the primary rRNA binding proteins, it binds specifically to the 5'-end of 16S ribosomal RNA. In Orientia tsutsugamushi (strain Ikeda) (Rickettsia tsutsugamushi), this protein is Small ribosomal subunit protein uS17.